Consider the following 182-residue polypeptide: Adenine phosphoribosyltransferase (182 aa).

The protein belongs to the purine/pyrimidine phosphoribosyltransferase family. As to quaternary structure, homodimer.

It is found in the cytoplasm. The catalysed reaction is AMP + diphosphate = 5-phospho-alpha-D-ribose 1-diphosphate + adenine. Its pathway is purine metabolism; AMP biosynthesis via salvage pathway; AMP from adenine: step 1/1. Catalyzes a salvage reaction resulting in the formation of AMP, that is energically less costly than de novo synthesis. The chain is Adenine phosphoribosyltransferase from Pseudomonas fluorescens (strain SBW25).